Reading from the N-terminus, the 81-residue chain is D-alanyl carrier protein (81 aa).

A Carrier domain is found at 1-81; that stretch reads MADEAIKNGV…KIIAKVEQAQ (81 aa). Ser-39 carries the O-(pantetheine 4'-phosphoryl)serine modification.

The protein belongs to the DltC family. 4'-phosphopantetheine is transferred from CoA to a specific serine of apo-DCP.

Its subcellular location is the cytoplasm. It participates in cell wall biogenesis; lipoteichoic acid biosynthesis. Functionally, carrier protein involved in the D-alanylation of lipoteichoic acid (LTA). The loading of thioester-linked D-alanine onto DltC is catalyzed by D-alanine--D-alanyl carrier protein ligase DltA. The DltC-carried D-alanyl group is further transferred to cell membrane phosphatidylglycerol (PG) by forming an ester bond, probably catalyzed by DltD. D-alanylation of LTA plays an important role in modulating the properties of the cell wall in Gram-positive bacteria, influencing the net charge of the cell wall. This chain is D-alanyl carrier protein, found in Lacticaseibacillus casei (strain BL23) (Lactobacillus casei).